Reading from the N-terminus, the 257-residue chain is UPF0246 protein HAPS_0280 (257 aa).

This sequence belongs to the UPF0246 family.

In Glaesserella parasuis serovar 5 (strain SH0165) (Haemophilus parasuis), this protein is UPF0246 protein HAPS_0280.